The following is a 1423-amino-acid chain: MNELTNFANPVAKPETFDQIQIGIASPERIRSWSFGEIKKPETINYRTFKPERDGLFCARIFGPIKDYECLCGKYKRMKYKGIVCEKCGVEVTVSKVRRERMGHIELAAPVAHIWFLKSLPSRIGLLLDMQLKQLERVLYFESYIVIEPGLTPLEKYQLLNEDELLEAQDEYGEDAFSAGIGAEAVRRMLEELDLEGEKEDLLKELAETKSELKPKKIIKRLKVVESFLESGNRPEWMILEVIPVIPPDLRPLVPLDGGRFATSDLNDLYRRVINRNNRLKRLMELRAPDIIVRNEKRMLQESVDALFDNGRRGRTITGANKRPLKSLSDMLKGKQGRFRQNLLGKRVDYSGRSVIVTGPELKLHQCGLPKKMALELFKPFIYARLDAKGLSMTLKQAKKWVEKERKEVWDILDEVIREHPVLLNRAPTLHRLGIQAFEPVLIEGKAIQLHPLVCSAFNADFDGDQMAVHVPLSLEAQLEARVLMMSTNNILSPANGKPIIVPSQDMVLGLYYLSMLKEGEPGEGSLIADMQEVHQALAAKAVTLHTKIISRVPQTDEDGNQYMKRVETTPGRMLLGETLPKSHKVPFETVNRLLTKKEIGDVIDIVYRHTGQKETVLFADAIMALGFRHAFQAGISFGKDDMIIPEAKEKEVEETRLLVKDFEQQYQDGLITQQEKYNKVIDAWSRCGDRVAAEMMKEISAVKKGADGREKPINAIYMMAHSGARGSAAQIKQLAGMRGLMAKPSGEIIETPIISNFKEGLTVLEYFNSTHGARKGLADTALKTANSGYLTRRLVDVSQDCVVVEVDCGTDRALDMKAIVQGGATIASLGERILGRTAAEDIVDSKTNEVLIAEGTLLDEAMVAAVEAIGIQSVKIRSPLVCESKGGVCAACYGRDLARGTPVNIGEAVGVIAAQSIGEPGTQLTMRTFHIGGAAQLNEQSNLESVADGSIEYRELRTITDPRGRRVSLSRSGEVAIIDSEGRERATHRLPYGAHLLLDDGAAVAKGDRIAEWDPFTMPVITETGGIVKYQDLIDNQTLTEQTDEATGISQKVVIEYRATSRKEDLRPRLTLLDDSSGETARYMLAPGAMLSVEDGQEVKAGEVLARVSRESAKTRDITGGLPRVAELFEARKPKENAIIAKVSGRVEFGKDYKAKRKIIIRPDDGSDAVEYLVPKSKVIDVQEGDYVKRGDNLIGGSPDPHDILEVLGIEPLAEYLVSEIQEVYRLQGVKINDKHIETIVRQMLQKVEITDGGDTTLLPGEQVDREEMDEINAKADAEGRTIAQGKPVLLGITKASLQTRSFISAASFQETTRVLTDASVQGKVDTLNGLKENVIVGRLIPAGTGAGMSRLRVTASSRDAALRAAQRNWQESLIAPQTAAEEHAAELRQPVQADTGDDPLGAVVGESHGTDADAGDYLTEE.

Positions 70, 72, 85, and 88 each coordinate Zn(2+). Mg(2+) contacts are provided by aspartate 461, aspartate 463, and aspartate 465. Residues cysteine 809, cysteine 883, cysteine 890, and cysteine 893 each contribute to the Zn(2+) site. The segment at 1383–1423 (EEHAAELRQPVQADTGDDPLGAVVGESHGTDADAGDYLTEE) is disordered.

It belongs to the RNA polymerase beta' chain family. As to quaternary structure, the RNAP catalytic core consists of 2 alpha, 1 beta, 1 beta' and 1 omega subunit. When a sigma factor is associated with the core the holoenzyme is formed, which can initiate transcription. Requires Mg(2+) as cofactor. Zn(2+) is required as a cofactor.

It carries out the reaction RNA(n) + a ribonucleoside 5'-triphosphate = RNA(n+1) + diphosphate. DNA-dependent RNA polymerase catalyzes the transcription of DNA into RNA using the four ribonucleoside triphosphates as substrates. The polypeptide is DNA-directed RNA polymerase subunit beta' (Rhizorhabdus wittichii (strain DSM 6014 / CCUG 31198 / JCM 15750 / NBRC 105917 / EY 4224 / RW1) (Sphingomonas wittichii)).